We begin with the raw amino-acid sequence, 723 residues long: Catalase-peroxidase (723 aa).

The tryptophyl-tyrosyl-methioninium (Trp-Tyr) (with M-251) cross-link spans 97–225 (WHAAGSYRVT…LAAVQMGLIY (129 aa)). His-98 serves as the catalytic Proton acceptor. Residues 225–251 (YVNPEGVNGKSDPLATAAQMRETFARM) constitute a cross-link (tryptophyl-tyrosyl-methioninium (Tyr-Met) (with W-97)). His-266 lines the heme b pocket.

It belongs to the peroxidase family. Peroxidase/catalase subfamily. As to quaternary structure, homodimer or homotetramer. Heme b serves as cofactor. Post-translationally, formation of the three residue Trp-Tyr-Met cross-link is important for the catalase, but not the peroxidase activity of the enzyme.

It carries out the reaction H2O2 + AH2 = A + 2 H2O. The catalysed reaction is 2 H2O2 = O2 + 2 H2O. Its function is as follows. Bifunctional enzyme with both catalase and broad-spectrum peroxidase activity. The chain is Catalase-peroxidase from Agrobacterium fabrum (strain C58 / ATCC 33970) (Agrobacterium tumefaciens (strain C58)).